The following is an 84-amino-acid chain: MKVKIKCWNGVATWLWVANDENCGICRMAFNGCCPDCKVPGDDCPLVWGQCSHCFHMHCILKWLNAQQVQQHCPMCRQEWKFKE.

12 residues coordinate Zn(2+): Cys-23, Cys-26, Cys-34, Cys-37, Cys-44, Cys-51, His-53, His-56, His-58, Cys-59, Cys-73, and Cys-76. An RING-type zinc finger spans residues 34-77; sequence CPDCKVPGDDCPLVWGQCSHCFHMHCILKWLNAQQVQQHCPMCR.

The protein belongs to the RING-box family. In terms of assembly, the mammalian APC/C is composed at least of 14 distinct subunits ANAPC1, ANAPC2, CDC27/APC3, ANAPC4, ANAPC5, CDC16/APC6, ANAPC7, CDC23/APC8, ANAPC10, ANAPC11, CDC26/APC12, ANAPC13, ANAPC15 and ANAPC16 that assemble into a complex of at least 19 chains with a combined molecular mass of around 1.2 MDa; APC/C interacts with FZR1 and FBXO5. Interacts with the cullin domain of ANAPC2. Interacts with UBE2D2. Post-translationally, auto-ubiquitinated.

It is found in the cytoplasm. Its subcellular location is the nucleus. It functions in the pathway protein modification; protein ubiquitination. Functionally, together with the cullin protein ANAPC2, constitutes the catalytic component of the anaphase promoting complex/cyclosome (APC/C), a cell cycle-regulated E3 ubiquitin ligase that controls progression through mitosis and the G1 phase of the cell cycle. The APC/C complex acts by mediating ubiquitination and subsequent degradation of target proteins: it mainly mediates the formation of 'Lys-11'-linked polyubiquitin chains and, to a lower extent, the formation of 'Lys-48'- and 'Lys-63'-linked polyubiquitin chains. The APC/C complex catalyzes assembly of branched 'Lys-11'-/'Lys-48'-linked branched ubiquitin chains on target proteins. May recruit the E2 ubiquitin-conjugating enzymes to the complex. The sequence is that of Anaphase-promoting complex subunit 11 (Anapc11) from Mus musculus (Mouse).